We begin with the raw amino-acid sequence, 768 residues long: Cullin-3 (768 aa).

Serine 2 bears the N-acetylserine mark. Positions 2 to 41 (SNLSKGTGSRKDTKMRIRAFPMTMDEKYVNSIWDLLKNAI) are interaction with KLHL18. Serine 585 carries the phosphoserine modification. The disordered stretch occupies residues 677 to 698 (VAAKQGESDPERKETRQKVDDD). Positions 682–698 (GESDPERKETRQKVDDD) are enriched in basic and acidic residues. One can recognise a Cullin neddylation domain in the interval 698-760 (DRKHEIEAAI…REYLARTPED (63 aa)). A Glycyl lysine isopeptide (Lys-Gly) (interchain with G-Cter in NEDD8) cross-link involves residue lysine 712.

It belongs to the cullin family. As to quaternary structure, forms neddylation-dependent homodimers. Component of multiple BCR (BTB-CUL3-RBX1) E3 ubiquitin-protein ligase complexes formed of CUL3, RBX1 and a variable BTB domain-containing protein acting as both, adapter to cullin and substrate recognition subunit. The BCR complex may be active as a heterodimeric complex, in which NEDD8, covalently attached to one CUL3 molecule, binds to the C-terminus of a second CUL3 molecule. Interacts with RBX1, RNF7, CYCE and TIP120A/CAND1. Part of the BCR(SPOP) containing SPOP, and of BCR containing homodimeric SPOPL or the heterodimer formed by SPOP and SPOPL. Part of the probable BCR(KLHL9-KLHL13) complex with BTB domain proteins KLHL9 and KLHL13. Part of the BCR(KLHL41) complex containing KLHL41. Component of the BCR(KLHL12) E3 ubiquitin ligase complex, at least composed of CUL3 and KLHL12 and RBX1. Component of the BCR(KLHL3) E3 ubiquitin ligase complex, at least composed of CUL3 and KLHL3 and RBX1. Part of the BCR(ENC1) complex containing ENC1. Part of a complex consisting of BMI1/PCGF4, CUL3 and SPOP. Part of a complex consisting of BRMS1, CUL3 and SPOP. Component of the BCR(KLHL21) E3 ubiquitin ligase complex, at least composed of CUL3, KLHL21 and RBX1. Component of the BCR(KLHL22) E3 ubiquitin ligase complex, at least composed of CUL3, KLHL22 and RBX1. Component of the BCR(KLHL25) E3 ubiquitin ligase complex, at least composed of CUL3, KLHL25 and RBX1. Part of a complex consisting of MACROH2A1, CUL3 and SPOP. Component of the BCR(KLHL42) E3 ubiquitin ligase complex, at least composed of CUL3 and KLHL42. Component of the BCR(KBTBD8) E3 ubiquitin ligase complex, at least composed of CUL3, KBTBD8 and RBX1. Interacts with KLHL42 (via the BTB domain). Interacts with KATNA1; the interaction is enhanced by KLHL42. Interacts with KCTD5, KLHL9, KLHL11, KLHL13, GAN, ZBTB16, KLHL3, KLHL15, KLHL20, KLHL36, GMCL2, BTBD1. Part of a complex that contains CUL3, RBX1 and GAN. Interacts (via BTB domain) with KLHL17; the interaction regulates surface GRIK2 expression. Interacts with KCTD7. Part of the BCR(GAN) complex containing GAN. Part of the BCR(KEAP1) complex containing KEAP1. vInteracts with KLHL10. Interacts with KAT5 and ATF2. Interacts with KCTD17 in the BCR(KCTD17) E3 ubiquitin ligase complex, at least composed of CUL3, KCTD17 and RBX1. Interacts (when neddylated) with ARIH1; leading to activate the E3 ligase activity of ARIH1. Interacts with COPS9. Interacts with PPP2R5B; this interaction is indirect and mediated through KLHL15-binding and leads to PPP2R5B proteasomal degradation. Interacts with RBBP8/CtIP; this interaction is indirect and mediated through KLHL15-binding and leads to RBBP8 proteasomal degradation. Interacts with KLHL24 in the BCR(KLHL24) E3 ubiquitin ligase complex, composed of CUL3, RBX1 and KLHL24. Interacts with RHOBTB2. Interacts (via BTB domain) with KLHL17; the interaction regulates surface GRIK2 expression. Interacts with AURKA and KLHL18 (via BTB domain). Interacts (unneddylated form) with DCUN1D1, DCUN1D2, DCUN1D3, DCUN1D4 and DCUN1D5; these interactions promote the cullin neddylation. Component of a BCR3 (BTB-CUL3-RBX1) E3 ubiquitin ligase complex, also named Cul3-RING ubiquitin ligase complex CUL3(KBTBD6/7), composed of CUL3, RBX1, KBTBD6 and KBTBD7. Component of the BCR(KBTBD2) E3 ubiquitin ligase complex, at least composed of CUL3, KBTBD2 and RBX1. Interacts with KBTBD2 (via the BTB domain). Component of the BCR(KBTBD4) E3 ubiquitin ligase complex, at least composed of CUL3, KBTBD4 and RBX1. Neddylated. Attachment of NEDD8 is required for the E3 ubiquitin-protein ligase activity of the BCR complex. Deneddylated via its interaction with the COP9 signalosome (CSN) complex.

It localises to the nucleus. The protein localises to the golgi apparatus. The protein resides in the cell projection. Its subcellular location is the cilium. It is found in the flagellum. It localises to the cytoplasm. The protein localises to the cytoskeleton. The protein resides in the spindle. Its subcellular location is the microtubule organizing center. It is found in the centrosome. It localises to the spindle pole. It participates in protein modification; protein ubiquitination. Its function is as follows. Core component of multiple cullin-RING-based BCR (BTB-CUL3-RBX1) E3 ubiquitin-protein ligase complexes which mediate the ubiquitination and subsequent proteasomal degradation of target proteins. BCR complexes and ARIH1 collaborate in tandem to mediate ubiquitination of target proteins. As a scaffold protein may contribute to catalysis through positioning of the substrate and the ubiquitin-conjugating enzyme. The E3 ubiquitin-protein ligase activity of the complex is dependent on the neddylation of the cullin subunit and is inhibited by the association of the deneddylated cullin subunit with TIP120A/CAND1. The functional specificity of the BCR complex depends on the BTB domain-containing protein as the substrate recognition component. BCR(KLHL42) is involved in ubiquitination of KATNA1. BCR(SPOP) is involved in ubiquitination of BMI1/PCGF4, BRMS1, MACROH2A1 and DAXX, GLI2 and GLI3. Can also form a cullin-RING-based BCR (BTB-CUL3-RBX1) E3 ubiquitin-protein ligase complex containing homodimeric SPOPL or the heterodimer formed by SPOP and SPOPL; these complexes have lower ubiquitin ligase activity. BCR(KLHL9-KLHL13) controls the dynamic behavior of AURKB on mitotic chromosomes and thereby coordinates faithful mitotic progression and completion of cytokinesis. BCR(KLHL12) is involved in ER-Golgi transport by regulating the size of COPII coats, thereby playing a key role in collagen export, which is required for embryonic stem (ES) cells division: BCR(KLHL12) acts by mediating monoubiquitination of SEC31 (SEC31A or SEC31B). BCR(KLHL3) acts as a regulator of ion transport in the distal nephron; by mediating ubiquitination of WNK4. The BCR(KLHL20) E3 ubiquitin ligase complex is involved in interferon response and anterograde Golgi to endosome transport: it mediates both ubiquitination leading to degradation and 'Lys-33'-linked ubiquitination. The BCR(KLHL21) E3 ubiquitin ligase complex regulates localization of the chromosomal passenger complex (CPC) from chromosomes to the spindle midzone in anaphase and mediates the ubiquitination of AURKB. The BCR(KLHL22) ubiquitin ligase complex mediates monoubiquitination of PLK1, leading to PLK1 dissociation from phosphoreceptor proteins and subsequent removal from kinetochores, allowing silencing of the spindle assembly checkpoint (SAC) and chromosome segregation. The BCR(KLHL22) ubiquitin ligase complex is also responsible for the amino acid-stimulated 'Lys-48' polyubiquitination and proteasomal degradation of DEPDC5. Through the degradation of DEPDC5, releases the GATOR1 complex-mediated inhibition of the TORC1 pathway. The BCR(KLHL25) ubiquitin ligase complex is involved in translational homeostasis by mediating ubiquitination and subsequent degradation of hypophosphorylated EIF4EBP1 (4E-BP1). The BCR(KLHL25) ubiquitin ligase complex is also involved in lipid synthesis by mediating ubiquitination and degradation of ACLY. The BCR(KBTBD8) complex acts by mediating monoubiquitination of NOLC1 and TCOF1, leading to remodel the translational program of differentiating cells in favor of neural crest specification. Involved in ubiquitination of cyclin E and of cyclin D1 (in vitro) thus involved in regulation of G1/S transition. Involved in the ubiquitination of KEAP1, ENC1 and KLHL41. In concert with ATF2 and RBX1, promotes degradation of KAT5 thereby attenuating its ability to acetylate and activate ATM. The BCR(KCTD17) E3 ubiquitin ligase complex mediates ubiquitination and degradation of TCHP, a down-regulator of cilium assembly, thereby inducing ciliogenesis. The BCR(KLHL24) E3 ubiquitin ligase complex mediates ubiquitination of KRT14, controls KRT14 levels during keratinocytes differentiation, and is essential for skin integrity. The BCR(KLHL18) E3 ubiquitin ligase complex mediates the ubiquitination of AURKA leading to its activation at the centrosome which is required for initiating mitotic entry. The BCR(KEAP1) E3 ubiquitin ligase complex acts as a key sensor of oxidative and electrophilic stress by mediating ubiquitination and degradation of NFE2L2/NRF2, a transcription factor regulating expression of many cytoprotective genes. As part of the CUL3(KBTBD6/7) E3 ubiquitin ligase complex functions mediates 'Lys-48' ubiquitination and proteasomal degradation of TIAM1. By controlling the ubiquitination of that RAC1 guanine exchange factors (GEF), regulates RAC1 signal transduction and downstream biological processes including the organization of the cytoskeleton, cell migration and cell proliferation. The BCR(KBTBD4) E3 ubiquitin ligase complex targets CoREST corepressor complex components RCOR1, KDM1A/LSD1 and HDAC2 for proteasomal degradation with RCOR1 likely to be the primary target while degradation of KDM1A and HDAC2 is likely due to their association with RCOR1. It also targets RCOR3, MIER2 and MIER3 for proteasomal degradation as well as associated proteins ZNF217 and RREB1 with degradation being dependent on the presence of an ELM2 domain in the target proteins. The BCR(ARMC5) complex mediates premature transcription termination of transcripts that are unfavorably configured for transcriptional elongation by mediating ubiquitination of Pol II subunit POLR2A. Required for 'Lys-63'-linked ubiquitination of large ribosomal subunit protein MRPL12. In Rattus norvegicus (Rat), this protein is Cullin-3 (Cul3).